Here is a 184-residue protein sequence, read N- to C-terminus: ATP synthase subunit delta (184 aa).

It belongs to the ATPase delta chain family. F-type ATPases have 2 components, F(1) - the catalytic core - and F(0) - the membrane proton channel. F(1) has five subunits: alpha(3), beta(3), gamma(1), delta(1), epsilon(1). F(0) has three main subunits: a(1), b(2) and c(10-14). The alpha and beta chains form an alternating ring which encloses part of the gamma chain. F(1) is attached to F(0) by a central stalk formed by the gamma and epsilon chains, while a peripheral stalk is formed by the delta and b chains.

It localises to the cell inner membrane. F(1)F(0) ATP synthase produces ATP from ADP in the presence of a proton or sodium gradient. F-type ATPases consist of two structural domains, F(1) containing the extramembraneous catalytic core and F(0) containing the membrane proton channel, linked together by a central stalk and a peripheral stalk. During catalysis, ATP synthesis in the catalytic domain of F(1) is coupled via a rotary mechanism of the central stalk subunits to proton translocation. Its function is as follows. This protein is part of the stalk that links CF(0) to CF(1). It either transmits conformational changes from CF(0) to CF(1) or is implicated in proton conduction. The chain is ATP synthase subunit delta from Rickettsia peacockii (strain Rustic).